The chain runs to 396 residues: NADH-quinone oxidoreductase subunit D (396 aa).

Belongs to the complex I 49 kDa subunit family. In terms of assembly, NDH-1 is composed of 14 different subunits. Subunits NuoB, C, D, E, F, and G constitute the peripheral sector of the complex.

Its subcellular location is the cell inner membrane. It catalyses the reaction a quinone + NADH + 5 H(+)(in) = a quinol + NAD(+) + 4 H(+)(out). In terms of biological role, NDH-1 shuttles electrons from NADH, via FMN and iron-sulfur (Fe-S) centers, to quinones in the respiratory chain. The immediate electron acceptor for the enzyme in this species is believed to be ubiquinone. Couples the redox reaction to proton translocation (for every two electrons transferred, four hydrogen ions are translocated across the cytoplasmic membrane), and thus conserves the redox energy in a proton gradient. The sequence is that of NADH-quinone oxidoreductase subunit D from Brucella suis biovar 1 (strain 1330).